The following is a 379-amino-acid chain: Homoserine O-succinyltransferase (379 aa).

The 310-residue stretch at Asn51 to Leu360 folds into the AB hydrolase-1 domain. Ser157 serves as the catalytic Nucleophile. Arg227 is a binding site for substrate. Residues Asp323 and His356 contribute to the active site. Residue Asp357 coordinates substrate.

The protein belongs to the AB hydrolase superfamily. MetX family. In terms of assembly, homodimer.

Its subcellular location is the cytoplasm. The catalysed reaction is L-homoserine + succinyl-CoA = O-succinyl-L-homoserine + CoA. The protein operates within amino-acid biosynthesis; L-methionine biosynthesis via de novo pathway; O-succinyl-L-homoserine from L-homoserine: step 1/1. In terms of biological role, transfers a succinyl group from succinyl-CoA to L-homoserine, forming succinyl-L-homoserine. The polypeptide is Homoserine O-succinyltransferase (Pseudomonas fluorescens (strain Pf0-1)).